The chain runs to 206 residues: Ribonuclease HII (206 aa).

Residues 19 to 206 (ALIAGVDEVG…GPVKRALGIE (188 aa)) enclose the RNase H type-2 domain. Positions 25, 26, and 117 each coordinate a divalent metal cation.

This sequence belongs to the RNase HII family. It depends on Mn(2+) as a cofactor. Mg(2+) serves as cofactor.

It is found in the cytoplasm. The enzyme catalyses Endonucleolytic cleavage to 5'-phosphomonoester.. In terms of biological role, endonuclease that specifically degrades the RNA of RNA-DNA hybrids. The chain is Ribonuclease HII from Vibrio cholerae serotype O1 (strain M66-2).